We begin with the raw amino-acid sequence, 499 residues long: Probable cytosol aminopeptidase (499 aa).

Mn(2+) is bound by residues lysine 267 and aspartate 272. Lysine 279 is an active-site residue. 3 residues coordinate Mn(2+): aspartate 290, aspartate 349, and glutamate 351. Residue arginine 353 is part of the active site.

It belongs to the peptidase M17 family. Mn(2+) serves as cofactor.

Its subcellular location is the cytoplasm. The enzyme catalyses Release of an N-terminal amino acid, Xaa-|-Yaa-, in which Xaa is preferably Leu, but may be other amino acids including Pro although not Arg or Lys, and Yaa may be Pro. Amino acid amides and methyl esters are also readily hydrolyzed, but rates on arylamides are exceedingly low.. The catalysed reaction is Release of an N-terminal amino acid, preferentially leucine, but not glutamic or aspartic acids.. In terms of biological role, presumably involved in the processing and regular turnover of intracellular proteins. Catalyzes the removal of unsubstituted N-terminal amino acids from various peptides. The protein is Probable cytosol aminopeptidase of Alkaliphilus oremlandii (strain OhILAs) (Clostridium oremlandii (strain OhILAs)).